We begin with the raw amino-acid sequence, 430 residues long: MKTTIKQAKDHLNQDVTIGAWLTNKRSSGKIAFLQLRDGTGFMQGVVVKSEVDEEVFKLAKEITQESSLYVTGTITEDNRSDLGYEMQVKSIEVISEAHDYPITPKNHGTEFLMDHRHLWLRSKKQHAVMKIRNEVIRATYEFFNKDGFTKVDPPILTASAPEGTSELFHTKYFDQDAFLSQSGQLYLEAAAMAHGKVFSFGPTFRAEKSKTRRHLIEFWMIEGEMAFINHAESLEIQEQYVTHVVKSVLENCKLELKILERDTSKLEKVATPFPRISYDDAIEFLKSEGFDDIEWGEDFGAPHETAIANHYDLPVFITNYPTKIKPFYMQPNPENEETVLCADLIAPEGYGEIIGGSERVDDLELLEQRVKEHGLDEEAYSYYLDLRRYGSVPHCGFGLGLERTVAWISGVEHVRETAPFPRLLNRLYP.

Belongs to the class-II aminoacyl-tRNA synthetase family. Homodimer.

Its subcellular location is the cytoplasm. The catalysed reaction is tRNA(Asn) + L-asparagine + ATP = L-asparaginyl-tRNA(Asn) + AMP + diphosphate + H(+). The polypeptide is Asparagine--tRNA ligase (Staphylococcus aureus (strain MSSA476)).